Consider the following 463-residue polypeptide: ATP-dependent protease ATPase subunit HslU (463 aa).

ATP is bound by residues Ile-19, 61-66 (GVGKTE), Asp-277, Glu-341, and Arg-413.

It belongs to the ClpX chaperone family. HslU subfamily. As to quaternary structure, a double ring-shaped homohexamer of HslV is capped on each side by a ring-shaped HslU homohexamer. The assembly of the HslU/HslV complex is dependent on binding of ATP.

The protein localises to the cytoplasm. Its function is as follows. ATPase subunit of a proteasome-like degradation complex; this subunit has chaperone activity. The binding of ATP and its subsequent hydrolysis by HslU are essential for unfolding of protein substrates subsequently hydrolyzed by HslV. HslU recognizes the N-terminal part of its protein substrates and unfolds these before they are guided to HslV for hydrolysis. This is ATP-dependent protease ATPase subunit HslU from Bacillus cereus (strain ATCC 14579 / DSM 31 / CCUG 7414 / JCM 2152 / NBRC 15305 / NCIMB 9373 / NCTC 2599 / NRRL B-3711).